A 576-amino-acid chain; its full sequence is 2-succinyl-5-enolpyruvyl-6-hydroxy-3-cyclohexene-1-carboxylate synthase (576 aa).

The protein belongs to the TPP enzyme family. MenD subfamily. Homodimer. Mg(2+) serves as cofactor. Requires Mn(2+) as cofactor. The cofactor is thiamine diphosphate.

It carries out the reaction isochorismate + 2-oxoglutarate + H(+) = 5-enolpyruvoyl-6-hydroxy-2-succinyl-cyclohex-3-ene-1-carboxylate + CO2. The protein operates within quinol/quinone metabolism; 1,4-dihydroxy-2-naphthoate biosynthesis; 1,4-dihydroxy-2-naphthoate from chorismate: step 2/7. It participates in quinol/quinone metabolism; menaquinone biosynthesis. Functionally, catalyzes the thiamine diphosphate-dependent decarboxylation of 2-oxoglutarate and the subsequent addition of the resulting succinic semialdehyde-thiamine pyrophosphate anion to isochorismate to yield 2-succinyl-5-enolpyruvyl-6-hydroxy-3-cyclohexene-1-carboxylate (SEPHCHC). The sequence is that of 2-succinyl-5-enolpyruvyl-6-hydroxy-3-cyclohexene-1-carboxylate synthase from Aliivibrio fischeri (strain ATCC 700601 / ES114) (Vibrio fischeri).